A 282-amino-acid polypeptide reads, in one-letter code: Elongation factor Ts (282 aa).

The interval 79-82 (TDFV) is involved in Mg(2+) ion dislocation from EF-Tu.

The protein belongs to the EF-Ts family.

The protein resides in the cytoplasm. In terms of biological role, associates with the EF-Tu.GDP complex and induces the exchange of GDP to GTP. It remains bound to the aminoacyl-tRNA.EF-Tu.GTP complex up to the GTP hydrolysis stage on the ribosome. The protein is Elongation factor Ts of Shewanella piezotolerans (strain WP3 / JCM 13877).